We begin with the raw amino-acid sequence, 119 residues long: Anamorsin homolog (119 aa).

The disordered stretch occupies residues 33-119 (LKQATKGEDC…KVKLNLTDDI (87 aa)). Cys42, Cys49, Cys52, and Cys54 together coordinate [2Fe-2S] cluster. The segment at 42 to 54 (CTTRRRACKNCVC) is fe-S binding site A. [4Fe-4S] cluster is bound by residues Cys81, Cys84, Cys92, and Cys95. 2 consecutive short sequence motifs (cx2C motif) follow at residues 81–84 (CGNC) and 92–95 (CANC). Residues 81-95 (CGNCAKGDAFRCANC) are fe-S binding site B.

It belongs to the anamorsin family. Monomer. [2Fe-2S] cluster serves as cofactor. [4Fe-4S] cluster is required as a cofactor.

The protein resides in the cytoplasm. It localises to the mitochondrion intermembrane space. Component of the cytosolic iron-sulfur (Fe-S) protein assembly (CIA) machinery. Required for the maturation of extramitochondrial Fe-S proteins. Part of an electron transfer chain functioning in an early step of cytosolic Fe-S biogenesis, facilitating the de novo assembly of a [4Fe-4S] cluster on the cytosolic Fe-S scaffold complex. Electrons are transferred from NADPH via a FAD- and FMN-containing diflavin oxidoreductase. Together with the diflavin oxidoreductase, also required for the assembly of the diferric tyrosyl radical cofactor of ribonucleotide reductase (RNR), probably by providing electrons for reduction during radical cofactor maturation in the catalytic small subunit. This Leishmania braziliensis protein is Anamorsin homolog.